Consider the following 384-residue polypeptide: S-adenosylmethionine synthase (384 aa).

Histidine 15 lines the ATP pocket. Aspartate 17 is a binding site for Mg(2+). Glutamate 43 is a K(+) binding site. Residues glutamate 56 and glutamine 99 each coordinate L-methionine. Residues 99-109 (QSPDINQGVDR) are flexible loop. Residues 164-166 (DAK), 231-232 (RF), aspartate 240, 246-247 (RK), alanine 263, and lysine 267 contribute to the ATP site. Aspartate 240 contacts L-methionine. Lysine 271 contributes to the L-methionine binding site.

This sequence belongs to the AdoMet synthase family. In terms of assembly, homotetramer; dimer of dimers. Mg(2+) serves as cofactor. K(+) is required as a cofactor.

The protein localises to the cytoplasm. It carries out the reaction L-methionine + ATP + H2O = S-adenosyl-L-methionine + phosphate + diphosphate. Its pathway is amino-acid biosynthesis; S-adenosyl-L-methionine biosynthesis; S-adenosyl-L-methionine from L-methionine: step 1/1. Its function is as follows. Catalyzes the formation of S-adenosylmethionine (AdoMet) from methionine and ATP. The overall synthetic reaction is composed of two sequential steps, AdoMet formation and the subsequent tripolyphosphate hydrolysis which occurs prior to release of AdoMet from the enzyme. The protein is S-adenosylmethionine synthase of Shewanella halifaxensis (strain HAW-EB4).